Reading from the N-terminus, the 392-residue chain is L-lactate dehydrogenase (392 aa).

Positions 1–380 (MIISASTDYR…GSDSLVTGSA (380 aa)) constitute an FMN hydroxy acid dehydrogenase domain. Y24 serves as a coordination point for substrate. FMN is bound by residues S106 and Q127. Y129 provides a ligand contact to substrate. T155 lines the FMN pocket. R164 is a substrate binding site. Position 251 (K251) interacts with FMN. H275 acts as the Proton acceptor in catalysis. R278 provides a ligand contact to substrate. FMN is bound at residue 306–330 (DSGVRNGLDVVRMIAMGADTILLGR).

This sequence belongs to the FMN-dependent alpha-hydroxy acid dehydrogenase family. Requires FMN as cofactor.

It localises to the cell inner membrane. It catalyses the reaction (S)-lactate + A = pyruvate + AH2. Functionally, catalyzes the conversion of L-lactate to pyruvate. Is coupled to the respiratory chain. In Chromohalobacter salexigens (strain ATCC BAA-138 / DSM 3043 / CIP 106854 / NCIMB 13768 / 1H11), this protein is L-lactate dehydrogenase.